The sequence spans 208 residues: V-type ATP synthase subunit D (208 aa).

This sequence belongs to the V-ATPase D subunit family.

Produces ATP from ADP in the presence of a proton gradient across the membrane. The chain is V-type ATP synthase subunit D from Streptococcus pyogenes serotype M1.